The chain runs to 567 residues: Urease subunit alpha (567 aa).

The region spanning 128–567 is the Urease domain; the sequence is GGIDPHIHFI…LPLAQLYHLF (440 aa). Ni(2+)-binding residues include H133, H135, and K216. K216 carries the post-translational modification N6-carboxylysine. H218 serves as a coordination point for substrate. 2 residues coordinate Ni(2+): H245 and H271. H319 (proton donor) is an active-site residue. Residue D359 participates in Ni(2+) binding.

It belongs to the metallo-dependent hydrolases superfamily. Urease alpha subunit family. In terms of assembly, heterotrimer of UreA (gamma), UreB (beta) and UreC (alpha) subunits. Three heterotrimers associate to form the active enzyme. It depends on Ni cation as a cofactor. In terms of processing, carboxylation allows a single lysine to coordinate two nickel ions.

It is found in the cytoplasm. It carries out the reaction urea + 2 H2O + H(+) = hydrogencarbonate + 2 NH4(+). It functions in the pathway nitrogen metabolism; urea degradation; CO(2) and NH(3) from urea (urease route): step 1/1. This chain is Urease subunit alpha, found in Marinobacter nauticus (strain ATCC 700491 / DSM 11845 / VT8) (Marinobacter aquaeolei).